The following is a 345-amino-acid chain: Heat-inducible transcription repressor HrcA (345 aa).

Belongs to the HrcA family.

In terms of biological role, negative regulator of class I heat shock genes (grpE-dnaK-dnaJ and groELS operons). Prevents heat-shock induction of these operons. This Lachnoclostridium phytofermentans (strain ATCC 700394 / DSM 18823 / ISDg) (Clostridium phytofermentans) protein is Heat-inducible transcription repressor HrcA.